We begin with the raw amino-acid sequence, 497 residues long: 3-ketoacyl-CoA synthase 6 (497 aa).

Transmembrane regions (helical) follow at residues 25–45 and 64–84; these read LVNH…AVEL and LVQV…YFMS. Residues 81-370 form the FAE domain; the sequence is YFMSKPRTIY…FLTSLIGRKI (290 aa). Active-site residues include cysteine 225, histidine 304, histidine 388, histidine 392, histidine 421, and asparagine 425.

Belongs to the thiolase-like superfamily. Chalcone/stilbene synthases family. In terms of tissue distribution, in epidermal cells of aerial tissues and in the tapetum of anthers near maturity. Expressed in siliques, flowers and leaves.

It localises to the endoplasmic reticulum membrane. The enzyme catalyses a very-long-chain acyl-CoA + malonyl-CoA + H(+) = a very-long-chain 3-oxoacyl-CoA + CO2 + CoA. The protein operates within lipid metabolism; fatty acid biosynthesis. Strongly inhibited by metazachlor and mefluidide. In terms of biological role, contributes to cuticular wax and suberin biosynthesis. Involved in both decarbonylation and acyl-reduction wax synthesis pathways. Required for elongation of C24 fatty acids, an essential step of the cuticular wax production. Major condensing enzyme for stem wax and pollen coat lipid biosynthesis. The protein is 3-ketoacyl-CoA synthase 6 of Arabidopsis thaliana (Mouse-ear cress).